We begin with the raw amino-acid sequence, 78 residues long: Exodeoxyribonuclease 7 small subunit (78 aa).

Belongs to the XseB family. Heterooligomer composed of large and small subunits.

Its subcellular location is the cytoplasm. It catalyses the reaction Exonucleolytic cleavage in either 5'- to 3'- or 3'- to 5'-direction to yield nucleoside 5'-phosphates.. Its function is as follows. Bidirectionally degrades single-stranded DNA into large acid-insoluble oligonucleotides, which are then degraded further into small acid-soluble oligonucleotides. This chain is Exodeoxyribonuclease 7 small subunit, found in Pediococcus pentosaceus (strain ATCC 25745 / CCUG 21536 / LMG 10740 / 183-1w).